The sequence spans 497 residues: Aspartyl/glutamyl-tRNA(Asn/Gln) amidotransferase subunit B (497 aa).

The protein belongs to the GatB/GatE family. GatB subfamily. In terms of assembly, heterotrimer of A, B and C subunits.

The enzyme catalyses L-glutamyl-tRNA(Gln) + L-glutamine + ATP + H2O = L-glutaminyl-tRNA(Gln) + L-glutamate + ADP + phosphate + H(+). The catalysed reaction is L-aspartyl-tRNA(Asn) + L-glutamine + ATP + H2O = L-asparaginyl-tRNA(Asn) + L-glutamate + ADP + phosphate + 2 H(+). Its function is as follows. Allows the formation of correctly charged Asn-tRNA(Asn) or Gln-tRNA(Gln) through the transamidation of misacylated Asp-tRNA(Asn) or Glu-tRNA(Gln) in organisms which lack either or both of asparaginyl-tRNA or glutaminyl-tRNA synthetases. The reaction takes place in the presence of glutamine and ATP through an activated phospho-Asp-tRNA(Asn) or phospho-Glu-tRNA(Gln). This is Aspartyl/glutamyl-tRNA(Asn/Gln) amidotransferase subunit B from Cutibacterium acnes (strain DSM 16379 / KPA171202) (Propionibacterium acnes).